The sequence spans 229 residues: Predicted GPI-anchored protein 19 (229 aa).

The first 20 residues, 1-20, serve as a signal peptide directing secretion; sequence MFSTTSIVLWFTILLPVTLP. The segment at 63–92 is disordered; the sequence is DNEQVLRKSKKKKKTTSTGTPGNENTTDFA. Residues 81–92 show a composition bias toward polar residues; that stretch reads GTPGNENTTDFA. N-linked (GlcNAc...) asparagine glycosylation is found at Asn87, Asn184, and Asn189. The GPI-anchor amidated glycine moiety is linked to residue Gly208. The propeptide at 209–229 is removed in mature form; sequence FGSLIPYNSFYLYILLFCIIF.

The protein resides in the cell membrane. Functionally, predicted GPI-anchored protein which may have a role during host infection. This chain is Predicted GPI-anchored protein 19 (PGA19), found in Candida albicans (strain SC5314 / ATCC MYA-2876) (Yeast).